Consider the following 439-residue polypeptide: Protein ABHD8 (439 aa).

Disordered regions lie at residues 49–70 (AGPA…AAQG) and 124–156 (PAGS…RPKR). Residues 136–145 (AGSGSGSGSG) show a composition bias toward gly residues. Residues 146–156 (GRRRRARRPKR) show a composition bias toward basic residues. Residues 177 to 279 (VLFFIHGVGG…HKVIMINGGG (103 aa)) enclose the AB hydrolase-1 domain. Active-site charge relay system residues include serine 252, aspartate 370, and histidine 398.

This sequence belongs to the AB hydrolase superfamily. Interacts with NLRP3 (via NACHT and LLR domains); this interaction is enhanced in the presence of NLRP3 inflammasome inducers, such as ATP, nigericin, silica, or alum. Interacts with ZDHHC12. As to quaternary structure, (Microbial infection) Interacts with SARS-CoV-2 nucleoprotein N; this interaction disrupts the NLRP3-ABHD8 association, enhancing NLRP3 stability, ultimately leading to increased inflammasome activation.

It localises to the cytoplasm. Negatively regulates NLRP3-driven inflammation. Promotes NLRP3 degradation through the chaperone-mediated autophagy (CMA) pathway, hence attenuating inflammasome activation and IL1B secretion. Acts by recruiting palmitoyltransferase ZDHHC12 to NLRP3, facilitating NLRP3 palmitoylation and subsequent degradation. The polypeptide is Protein ABHD8 (Homo sapiens (Human)).